Here is a 626-residue protein sequence, read N- to C-terminus: Leucine-rich repeat and fibronectin type-III domain-containing protein 3 (626 aa).

The first 16 residues, 1–16 (MAVLPLLLCLLPLAPA), serve as a signal peptide directing secretion. Over 17–539 (SSPPQPATSS…PHAPFLGGTM (523 aa)) the chain is Extracellular. The 41-residue stretch at 19–59 (PPQPATSSPCPRRCRCQTQSLPLSVLCPGAGLLFVPPSLDR) folds into the LRRNT domain. LRR repeat units lie at residues 84–105 (GLLH…AFAD), 108–129 (ALRA…QLRG), 132–153 (NLRH…ALDD), 157–178 (TLED…ALGR), 181–202 (NVNT…AFSR), and 205–226 (KLAR…PLFS). The LRRCT domain maps to 249 to 295 (NPLHCNCELVWLRRLAREDDLEACASPPALGGRYFWAVGEEEFVCEP). The Ig-like domain maps to 295-382 (PPVVTHRSPP…GEATAAVELT (88 aa)). The Fibronectin type-III 1 domain occupies 308 to 395 (PAGRPAALRC…PPPPQLANST (88 aa)). The cysteines at positions 317 and 366 are disulfide-linked. N339, N348, and N393 each carry an N-linked (GlcNAc...) asparagine glycan. A disordered region spans residues 382-423 (TVGPPPPPQLANSTSCDPPRDGEPDALTPPSAASASAKVADT). Residues 406–423 (DALTPPSAASASAKVADT) show a composition bias toward low complexity. The Fibronectin type-III 2 domain occupies 425–523 (APTDRGVQVT…GCARFSTEPA (99 aa)). Residues 540–560 (IIALGGVIVASVLVFIFVLLL) form a helical membrane-spanning segment. Topologically, residues 561-626 (RYKVHGVQPP…WGPSHEPAGP (66 aa)) are cytoplasmic.

It belongs to the LRFN family. As to quaternary structure, can form heteromeric complexes with LRFN1, LRFN2, LRFN4 and LRFN5. Able to form homomeric complexes across cell junctions, between adjacent cells. Does not interact with DLG4. N-glycosylated. In terms of tissue distribution, expressed in brain. Within brain, expressed in hippocampus, cerebellum, olfactory bulb and forebrain (at protein level).

The protein localises to the cell membrane. It is found in the cell projection. It localises to the axon. Its subcellular location is the dendrite. The protein resides in the synapse. The protein localises to the presynaptic cell membrane. It is found in the postsynaptic cell membrane. Its function is as follows. Cell adhesion molecule that mediates homophilic cell-cell adhesion in a Ca(2+)-independent manner. Promotes neurite outgrowth in hippocampal neurons. This Rattus norvegicus (Rat) protein is Leucine-rich repeat and fibronectin type-III domain-containing protein 3.